The chain runs to 91 residues: Putative regulatory protein Cyan7425_4125 (91 aa).

This sequence belongs to the RemA family.

The sequence is that of Putative regulatory protein Cyan7425_4125 from Cyanothece sp. (strain PCC 7425 / ATCC 29141).